Here is a 342-residue protein sequence, read N- to C-terminus: (Lyso)-N-acylphosphatidylethanolamine lipase (342 aa).

An AB hydrolase-1 domain is found at 70–201 (PLVMVHGFGG…KAVASVLGRS (132 aa)).

This sequence belongs to the peptidase S33 family. ABHD4/ABHD5 subfamily.

The enzyme catalyses N-hexadecanoyl-1,2-di-(9Z-octadecenoyl)-sn-glycero-3-phosphoethanolamine + H2O = N-hexadecanoyl-1-(9Z-octadecenoyl)-sn-glycero-3-phosphoethanolamine + (9Z)-octadecenoate + H(+). It catalyses the reaction an N-acyl-1,2-diacyl-sn-glycero-3-phosphoethanolamine + H2O = N,1-diacyl-sn-glycero-3-phosphoethanolamine + a fatty acid + H(+). It carries out the reaction N-hexadecanoyl-1-(9Z-octadecenoyl)-sn-glycero-3-phosphoethanolamine + H2O = N-hexadecanoyl-sn-glycero-3-phosphoethanolamine + (9Z)-octadecenoate + H(+). The catalysed reaction is N-octadecanoyl-1-(9Z-octadecenoyl)-sn-glycero-3-phosphoethanolamine + H2O = N-octadecanoyl-sn-glycero-3-phospho-ethanolamine + (9Z)-octadecenoate + H(+). The enzyme catalyses N-eicosanoyl-1-(9Z-octadecenoyl)-sn-glycero-3-phosphoethanolamine + H2O = N-eicosanoyl-sn-glycero-3-phosphoethanolamine + (9Z)-octadecenoate + H(+). It catalyses the reaction N,1-di-(9Z-octadecenoyl)-sn-glycero-3-phosphoethanolamine + H2O = N-(9Z-octadecenoyl)-sn-glycero-3-phosphoethanolamine + (9Z)-octadecenoate + H(+). It carries out the reaction N-(5Z,8Z,11Z,14Z-eicosatetraenoyl)-1-(9Z-octadecenoyl)-sn-glycero-3-phosphoethanolamine + H2O = N-(5Z,8Z,11Z,14Z-eicosatetraenoyl)-sn-glycero-3-phosphoethanolamine + (9Z)-octadecenoate + H(+). The catalysed reaction is 1-octadecanoyl-2-(9Z-octadecenoyl)-sn-glycero-3-phospho-(N-hexadecanoyl)-serine + H2O = 1-octadecanoyl-2-hydroxy-sn-glycero-3-phospho-(N-hexadecanoyl)-serine + (9Z)-octadecenoate + H(+). The enzyme catalyses 1-O-(1Z-octadecenoyl)-2-(9Z-octadecenoyl)-sn-glycero-3-phospho-N-hexadecanoyl-ethanolamine + H2O = 1-O-(1Z-octadecenyl)-sn-glycero-3-phospho-N-hexadecanoyl-ethanolamine + (9Z)-octadecenoate + H(+). It catalyses the reaction N,1-diacyl-sn-glycero-3-phosphoethanolamine + H2O = N-acyl-sn-glycero-3-phosphoethanolamine + a fatty acid + H(+). In terms of biological role, lysophospholipase selective for N-acyl phosphatidylethanolamine (NAPE). Contributes to the biosynthesis of N-acyl ethanolamines, including the endocannabinoid anandamide by hydrolyzing the sn-1 and sn-2 acyl chains from N-acyl phosphatidylethanolamine (NAPE) generating glycerophospho-N-acyl ethanolamine (GP-NAE), an intermediate for N-acyl ethanolamine biosynthesis. Hydrolyzes substrates bearing saturated, monounsaturated, polyunsaturated N-acyl chains. Shows no significant activity towards other lysophospholipids, including lysophosphatidylcholine, lysophosphatidylethanolamine and lysophosphatidylserine. This is (Lyso)-N-acylphosphatidylethanolamine lipase from Homo sapiens (Human).